Consider the following 150-residue polypeptide: Large ribosomal subunit protein uL23 (150 aa).

The disordered stretch occupies residues 1–24; that stretch reads MNKENKTQAVNKAKNTAKVAKKGS. Residues 7–18 are compositionally biased toward low complexity; sequence TQAVNKAKNTAK.

Belongs to the universal ribosomal protein uL23 family.

The protein is Large ribosomal subunit protein uL23 (RPL23A) of Tetrahymena thermophila (strain SB210).